The chain runs to 218 residues: 5-oxoprolinase subunit B (218 aa).

Belongs to the PxpB family. In terms of assembly, forms a complex composed of PxpA, PxpB and PxpC.

It carries out the reaction 5-oxo-L-proline + ATP + 2 H2O = L-glutamate + ADP + phosphate + H(+). Functionally, catalyzes the cleavage of 5-oxoproline to form L-glutamate coupled to the hydrolysis of ATP to ADP and inorganic phosphate. This chain is 5-oxoprolinase subunit B, found in Escherichia coli O157:H7.